The primary structure comprises 577 residues: Cell pattern formation-associated protein stuA (577 aa).

A disordered region spans residues 1–41 (MNQPQPYMDQHAPAPPPASNMTQYSNYGAPQPLQPATHGYG). The segment covering 19 to 28 (SNMTQYSNYG) has biased composition (polar residues). Positions 111–217 (RVTATLWEDE…HNIGALLYHP (107 aa)) constitute an HTH APSES-type domain. The segment at residues 145-166 (GTKLLNVAGMTRGRRDGILKSE) is a DNA-binding region (H-T-H motif). 2 disordered regions span residues 228 to 487 (ATMA…QLPS) and 518 to 577 (QYPA…AVRR). Composition is skewed to polar residues over residues 238 to 251 (SQEY…TQAP) and 319 to 333 (AVNS…SQGM). Residues 334–350 (PQYQTSQPPYTQSYSTP) show a composition bias toward low complexity. Polar residues predominate over residues 351–364 (GSYSQPQYTHQQPG). Over residues 390–399 (AENDHPDHKV) the composition is skewed to basic and acidic residues. The span at 465 to 479 (TPRTTNPYTGYNNTP) shows a compositional bias: low complexity. The tract at residues 526–552 (KRGREDDDQVDPYGRPSSALGEHKRQR) is nuclear localization domain.

The protein belongs to the EFG1/PHD1/stuA family.

The protein localises to the nucleus. Transcription factor that regulates asexual reproduction. Binds the StuA-response elements (StRE) with the consensus sequence 5'-(A/T)CGCG(T/A)N(A/C)-3' at the promoters of target genes. The chain is Cell pattern formation-associated protein stuA from Dothistroma septosporum (strain NZE10 / CBS 128990) (Red band needle blight fungus).